Consider the following 255-residue polypeptide: Zinc import ATP-binding protein ZnuC (255 aa).

The 216-residue stretch at 4–219 (VDVDGLSLRY…PEYRALFGTG (216 aa)) folds into the ABC transporter domain. 36 to 43 (GPNGSGKT) is an ATP binding site. Residues 234–255 (EHDHHDGCAHGQATEDRTEAAE) form a disordered region.

The protein belongs to the ABC transporter superfamily. Zinc importer (TC 3.A.1.15.5) family. In terms of assembly, the complex is composed of two ATP-binding proteins (ZnuC), two transmembrane proteins (ZnuB) and a solute-binding protein (ZnuA).

It localises to the cell inner membrane. The enzyme catalyses Zn(2+)(out) + ATP(in) + H2O(in) = Zn(2+)(in) + ADP(in) + phosphate(in) + H(+)(in). Part of the ABC transporter complex ZnuABC involved in zinc import. Responsible for energy coupling to the transport system. This Roseobacter denitrificans (strain ATCC 33942 / OCh 114) (Erythrobacter sp. (strain OCh 114)) protein is Zinc import ATP-binding protein ZnuC.